Here is a 453-residue protein sequence, read N- to C-terminus: tRNA modification GTPase MnmE (453 aa).

(6S)-5-formyl-5,6,7,8-tetrahydrofolate contacts are provided by Arg22, Glu79, and Lys119. Residues 215–376 (GMKVVIAGRP…LKQHLKSLMG (162 aa)) enclose the TrmE-type G domain. Asn225 contacts K(+). Residues 225–230 (NAGKSS), 244–250 (TEIAGTT), 269–272 (DTAG), and 334–337 (NKAD) each bind GTP. Ser229 lines the Mg(2+) pocket. Positions 244, 246, and 249 each coordinate K(+). Thr250 is a binding site for Mg(2+). Lys453 is a (6S)-5-formyl-5,6,7,8-tetrahydrofolate binding site.

Belongs to the TRAFAC class TrmE-Era-EngA-EngB-Septin-like GTPase superfamily. TrmE GTPase family. As to quaternary structure, homodimer. Heterotetramer of two MnmE and two MnmG subunits. K(+) is required as a cofactor.

It is found in the cytoplasm. Exhibits a very high intrinsic GTPase hydrolysis rate. Involved in the addition of a carboxymethylaminomethyl (cmnm) group at the wobble position (U34) of certain tRNAs, forming tRNA-cmnm(5)s(2)U34. This Shewanella pealeana (strain ATCC 700345 / ANG-SQ1) protein is tRNA modification GTPase MnmE.